Reading from the N-terminus, the 199-residue chain is Recombination protein RecR (199 aa).

The C4-type zinc-finger motif lies at Cys-58–Cys-73. Residues Ser-81–Pro-176 enclose the Toprim domain.

It belongs to the RecR family.

In terms of biological role, may play a role in DNA repair. It seems to be involved in an RecBC-independent recombinational process of DNA repair. It may act with RecF and RecO. The polypeptide is Recombination protein RecR (Desulfosudis oleivorans (strain DSM 6200 / JCM 39069 / Hxd3) (Desulfococcus oleovorans)).